Here is a 432-residue protein sequence, read N- to C-terminus: Glutamate-1-semialdehyde 2,1-aminomutase (432 aa).

The residue at position 272 (Lys272) is an N6-(pyridoxal phosphate)lysine.

The protein belongs to the class-III pyridoxal-phosphate-dependent aminotransferase family. HemL subfamily. As to quaternary structure, homodimer. The cofactor is pyridoxal 5'-phosphate.

Its subcellular location is the cytoplasm. It carries out the reaction (S)-4-amino-5-oxopentanoate = 5-aminolevulinate. It participates in porphyrin-containing compound metabolism; protoporphyrin-IX biosynthesis; 5-aminolevulinate from L-glutamyl-tRNA(Glu): step 2/2. The protein operates within porphyrin-containing compound metabolism; chlorophyll biosynthesis. In Acaryochloris marina (strain MBIC 11017), this protein is Glutamate-1-semialdehyde 2,1-aminomutase.